Reading from the N-terminus, the 310-residue chain is MAQKPVDNITQIIGGTPVVKLRNVVDDNAADVYVKLEYQNPGGSVKDRIALAMIEKAEREGKIKPGDTIVEPTSGNTGIGLAFVCAAKGYKAVFTMPETMSQERRNLLKAYGAELVLTPGSEAMKGAIKKAKELKEEHGYFEPQQFENPANPEVHELTTGPELLQQFEGKTIDAFLAGVGTGGTLSGVGKVLKKEYPNIEIVAIEPEASPVLSGGEPGPHKLQGLGAGFIPGTLNTEIYDSIIKVGNDTAMEMSRRVAKEEGILAGISSGAAIYAAIQKAKELGKGKTVVTVLPSNGERYLSTPLYSFDD.

N6-(pyridoxal phosphate)lysine is present on lysine 46. Residues asparagine 76, 180–184, and serine 268 contribute to the pyridoxal 5'-phosphate site; that span reads GTGGT.

The protein belongs to the cysteine synthase/cystathionine beta-synthase family. In terms of assembly, homodimer. It depends on pyridoxal 5'-phosphate as a cofactor.

The catalysed reaction is O-acetyl-L-serine + hydrogen sulfide = L-cysteine + acetate. Its pathway is amino-acid biosynthesis; L-cysteine biosynthesis; L-cysteine from L-serine: step 2/2. The protein is Cysteine synthase (cysK) of Staphylococcus aureus (strain Mu50 / ATCC 700699).